The primary structure comprises 300 residues: Geranylgeranyl pyrophosphate synthase (300 aa).

M1 carries the post-translational modification N-acetylmethionine. Residues K25, R28, and H57 each contribute to the isopentenyl diphosphate site. Mg(2+) is bound by residues D64 and D68. R73 provides a ligand contact to dimethylallyl diphosphate. Isopentenyl diphosphate is bound at residue R74. K151, T152, Q185, K202, and K212 together coordinate dimethylallyl diphosphate.

This sequence belongs to the FPP/GGPP synthase family. In terms of assembly, homohexamer; trimer of homodimers. Mg(2+) serves as cofactor. Abundantly expressed in testis. Found in other tissues to a lower extent. Expressed in dermal fibroblast and skeletal muscle.

The protein localises to the cytoplasm. The protein resides in the perinuclear region. It localises to the myofibril. Its subcellular location is the sarcomere. It is found in the z line. It catalyses the reaction isopentenyl diphosphate + dimethylallyl diphosphate = (2E)-geranyl diphosphate + diphosphate. The catalysed reaction is isopentenyl diphosphate + (2E)-geranyl diphosphate = (2E,6E)-farnesyl diphosphate + diphosphate. It carries out the reaction isopentenyl diphosphate + (2E,6E)-farnesyl diphosphate = (2E,6E,10E)-geranylgeranyl diphosphate + diphosphate. The protein operates within isoprenoid biosynthesis; farnesyl diphosphate biosynthesis; farnesyl diphosphate from geranyl diphosphate and isopentenyl diphosphate: step 1/1. Its pathway is isoprenoid biosynthesis; geranyl diphosphate biosynthesis; geranyl diphosphate from dimethylallyl diphosphate and isopentenyl diphosphate: step 1/1. It participates in isoprenoid biosynthesis; geranylgeranyl diphosphate biosynthesis; geranylgeranyl diphosphate from farnesyl diphosphate and isopentenyl diphosphate: step 1/1. Its activity is regulated as follows. Subject to product inhibition by geranylgeranyl diphosphate. Its function is as follows. Catalyzes the trans-addition of the three molecules of IPP onto DMAPP to form geranylgeranyl pyrophosphate, an important precursor of carotenoids and geranylated proteins. The polypeptide is Geranylgeranyl pyrophosphate synthase (GGPS1) (Homo sapiens (Human)).